The primary structure comprises 449 residues: UDP-N-acetylmuramoylalanine--D-glutamate ligase (449 aa).

113–119 (GTNGKTT) contributes to the ATP binding site.

The protein belongs to the MurCDEF family.

Its subcellular location is the cytoplasm. It carries out the reaction UDP-N-acetyl-alpha-D-muramoyl-L-alanine + D-glutamate + ATP = UDP-N-acetyl-alpha-D-muramoyl-L-alanyl-D-glutamate + ADP + phosphate + H(+). It participates in cell wall biogenesis; peptidoglycan biosynthesis. Its function is as follows. Cell wall formation. Catalyzes the addition of glutamate to the nucleotide precursor UDP-N-acetylmuramoyl-L-alanine (UMA). The sequence is that of UDP-N-acetylmuramoylalanine--D-glutamate ligase from Gloeothece citriformis (strain PCC 7424) (Cyanothece sp. (strain PCC 7424)).